Reading from the N-terminus, the 29-residue chain is Dermaseptin-1.2TR (29 aa).

The residue at position 29 (Val29) is a Valine amide.

Expressed by the skin glands.

The protein localises to the secreted. In terms of biological role, has antimicrobial activity. The sequence is that of Dermaseptin-1.2TR from Phyllomedusa trinitatis (Trinidad leaf frog).